The sequence spans 139 residues: Nucleoside diphosphate kinase (139 aa).

Positions 11, 59, 87, 93, 104, and 114 each coordinate ATP. H117 (pros-phosphohistidine intermediate) is an active-site residue.

Belongs to the NDK family. In terms of assembly, homotetramer. Mg(2+) is required as a cofactor.

The protein localises to the cytoplasm. It carries out the reaction a 2'-deoxyribonucleoside 5'-diphosphate + ATP = a 2'-deoxyribonucleoside 5'-triphosphate + ADP. It catalyses the reaction a ribonucleoside 5'-diphosphate + ATP = a ribonucleoside 5'-triphosphate + ADP. Its function is as follows. Major role in the synthesis of nucleoside triphosphates other than ATP. The ATP gamma phosphate is transferred to the NDP beta phosphate via a ping-pong mechanism, using a phosphorylated active-site intermediate. The sequence is that of Nucleoside diphosphate kinase from Wolbachia sp. subsp. Drosophila simulans (strain wRi).